The primary structure comprises 200 residues: dITP/XTP pyrophosphatase (200 aa).

8 to 13 serves as a coordination point for substrate; it reads TRNAGK. Aspartate 72 (proton acceptor) is an active-site residue. Mg(2+) is bound at residue aspartate 72. Substrate is bound by residues serine 73, 155–158, lysine 178, and 183–184; these read FGYD and HR.

Belongs to the HAM1 NTPase family. As to quaternary structure, homodimer. It depends on Mg(2+) as a cofactor.

It carries out the reaction XTP + H2O = XMP + diphosphate + H(+). The catalysed reaction is dITP + H2O = dIMP + diphosphate + H(+). The enzyme catalyses ITP + H2O = IMP + diphosphate + H(+). Pyrophosphatase that catalyzes the hydrolysis of nucleoside triphosphates to their monophosphate derivatives, with a high preference for the non-canonical purine nucleotides XTP (xanthosine triphosphate), dITP (deoxyinosine triphosphate) and ITP. Seems to function as a house-cleaning enzyme that removes non-canonical purine nucleotides from the nucleotide pool, thus preventing their incorporation into DNA/RNA and avoiding chromosomal lesions. This Streptomyces coelicolor (strain ATCC BAA-471 / A3(2) / M145) protein is dITP/XTP pyrophosphatase.